Consider the following 59-residue polypeptide: Large ribosomal subunit protein bL32 (59 aa).

Over residues 1 to 16 the composition is skewed to basic residues; sequence MAVPKRKTSPSKRGMR. A disordered region spans residues 1–59; that stretch reads MAVPKRKTSPSKRGMRRSADALKAPTYIEDKNSGELRRPHHIDLKTGMYRGRSVLPPKD. The span at 28-44 shows a compositional bias: basic and acidic residues; that stretch reads IEDKNSGELRRPHHIDL.

This sequence belongs to the bacterial ribosomal protein bL32 family.

The chain is Large ribosomal subunit protein bL32 from Bartonella quintana (strain Toulouse) (Rochalimaea quintana).